Reading from the N-terminus, the 200-residue chain is Oligoribonuclease (200 aa).

The Exonuclease domain occupies 20-183 (LVWLDMEMTG…ADIHESIDEL (164 aa)). Residue Y141 is part of the active site.

Belongs to the oligoribonuclease family.

It localises to the cytoplasm. 3'-to-5' exoribonuclease specific for small oligoribonucleotides. In Burkholderia vietnamiensis (strain G4 / LMG 22486) (Burkholderia cepacia (strain R1808)), this protein is Oligoribonuclease.